Here is a 159-residue protein sequence, read N- to C-terminus: Ribosomal RNA large subunit methyltransferase H (159 aa).

Residues Leu76, Gly108, and 127 to 132 (FSPMTF) contribute to the S-adenosyl-L-methionine site.

This sequence belongs to the RNA methyltransferase RlmH family. As to quaternary structure, homodimer.

The protein resides in the cytoplasm. It carries out the reaction pseudouridine(1915) in 23S rRNA + S-adenosyl-L-methionine = N(3)-methylpseudouridine(1915) in 23S rRNA + S-adenosyl-L-homocysteine + H(+). In terms of biological role, specifically methylates the pseudouridine at position 1915 (m3Psi1915) in 23S rRNA. In Alkaliphilus metalliredigens (strain QYMF), this protein is Ribosomal RNA large subunit methyltransferase H.